We begin with the raw amino-acid sequence, 178 residues long: Fimbrial adapter PapK (178 aa).

The signal sequence occupies residues 1-21; that stretch reads MIKSTGALLLFAALSAGQAIA.

It is found in the secreted. It localises to the fimbrium. Adapter that links the pilus rod to the base of the tip fibrillum. Regulates the length of the tip fibrillum and joins it to the pilus rod. Pili are polar filaments radiating from the surface of the bacterium to a length of 0.5-1.5 micrometers and numbering 100-300 per cell, and enable bacteria to colonize the epithelium of specific host organs. This chain is Fimbrial adapter PapK (papK), found in Escherichia coli O6:H1 (strain CFT073 / ATCC 700928 / UPEC).